A 358-amino-acid chain; its full sequence is Uroporphyrinogen decarboxylase (358 aa).

Residues 29–33 (RQAGR), Phe48, Asp79, Tyr155, Ser210, and His330 each bind substrate.

The protein belongs to the uroporphyrinogen decarboxylase family. Homodimer.

It is found in the cytoplasm. The catalysed reaction is uroporphyrinogen III + 4 H(+) = coproporphyrinogen III + 4 CO2. Its pathway is porphyrin-containing compound metabolism; protoporphyrin-IX biosynthesis; coproporphyrinogen-III from 5-aminolevulinate: step 4/4. Catalyzes the decarboxylation of four acetate groups of uroporphyrinogen-III to yield coproporphyrinogen-III. The protein is Uroporphyrinogen decarboxylase of Bordetella bronchiseptica (strain ATCC BAA-588 / NCTC 13252 / RB50) (Alcaligenes bronchisepticus).